Consider the following 197-residue polypeptide: Molybdenum cofactor guanylyltransferase (197 aa).

GTP is bound by residues 12–14 (LAG), Lys25, Asn53, Asp71, and Asp101. A Mg(2+)-binding site is contributed by Asp101.

The protein belongs to the MobA family. In terms of assembly, monomer. Mg(2+) is required as a cofactor.

It localises to the cytoplasm. The enzyme catalyses Mo-molybdopterin + GTP + H(+) = Mo-molybdopterin guanine dinucleotide + diphosphate. Its function is as follows. Transfers a GMP moiety from GTP to Mo-molybdopterin (Mo-MPT) cofactor (Moco or molybdenum cofactor) to form Mo-molybdopterin guanine dinucleotide (Mo-MGD) cofactor. This chain is Molybdenum cofactor guanylyltransferase, found in Bordetella pertussis (strain Tohama I / ATCC BAA-589 / NCTC 13251).